A 355-amino-acid chain; its full sequence is UDP-N-acetylglucosamine--N-acetylmuramyl-(pentapeptide) pyrophosphoryl-undecaprenol N-acetylglucosamine transferase (355 aa).

UDP-N-acetyl-alpha-D-glucosamine-binding positions include 15–17 (TGG), Asn127, Arg163, Ser191, Ile245, 264–269 (ALTVSE), and Gln289.

The protein belongs to the glycosyltransferase 28 family. MurG subfamily.

Its subcellular location is the cell inner membrane. The catalysed reaction is di-trans,octa-cis-undecaprenyl diphospho-N-acetyl-alpha-D-muramoyl-L-alanyl-D-glutamyl-meso-2,6-diaminopimeloyl-D-alanyl-D-alanine + UDP-N-acetyl-alpha-D-glucosamine = di-trans,octa-cis-undecaprenyl diphospho-[N-acetyl-alpha-D-glucosaminyl-(1-&gt;4)]-N-acetyl-alpha-D-muramoyl-L-alanyl-D-glutamyl-meso-2,6-diaminopimeloyl-D-alanyl-D-alanine + UDP + H(+). Its pathway is cell wall biogenesis; peptidoglycan biosynthesis. Its function is as follows. Cell wall formation. Catalyzes the transfer of a GlcNAc subunit on undecaprenyl-pyrophosphoryl-MurNAc-pentapeptide (lipid intermediate I) to form undecaprenyl-pyrophosphoryl-MurNAc-(pentapeptide)GlcNAc (lipid intermediate II). The chain is UDP-N-acetylglucosamine--N-acetylmuramyl-(pentapeptide) pyrophosphoryl-undecaprenol N-acetylglucosamine transferase from Yersinia enterocolitica serotype O:8 / biotype 1B (strain NCTC 13174 / 8081).